We begin with the raw amino-acid sequence, 194 residues long: FMN-dependent NADH:quinone oxidoreductase (194 aa).

FMN is bound by residues serine 10 and 90–93 (MYNL).

Belongs to the azoreductase type 1 family. In terms of assembly, homodimer. FMN serves as cofactor.

The enzyme catalyses 2 a quinone + NADH + H(+) = 2 a 1,4-benzosemiquinone + NAD(+). It carries out the reaction N,N-dimethyl-1,4-phenylenediamine + anthranilate + 2 NAD(+) = 2-(4-dimethylaminophenyl)diazenylbenzoate + 2 NADH + 2 H(+). Functionally, quinone reductase that provides resistance to thiol-specific stress caused by electrophilic quinones. In terms of biological role, also exhibits azoreductase activity. Catalyzes the reductive cleavage of the azo bond in aromatic azo compounds to the corresponding amines. This is FMN-dependent NADH:quinone oxidoreductase from Haemophilus influenzae (strain 86-028NP).